A 340-amino-acid polypeptide reads, in one-letter code: Phosphate acyltransferase (340 aa).

It belongs to the PlsX family. In terms of assembly, homodimer. Probably interacts with PlsY.

It localises to the cytoplasm. It carries out the reaction a fatty acyl-[ACP] + phosphate = an acyl phosphate + holo-[ACP]. The protein operates within lipid metabolism; phospholipid metabolism. Functionally, catalyzes the reversible formation of acyl-phosphate (acyl-PO(4)) from acyl-[acyl-carrier-protein] (acyl-ACP). This enzyme utilizes acyl-ACP as fatty acyl donor, but not acyl-CoA. The polypeptide is Phosphate acyltransferase (Pseudomonas syringae pv. tomato (strain ATCC BAA-871 / DC3000)).